The following is a 244-amino-acid chain: Cell division protein ZapD (244 aa).

The protein belongs to the ZapD family. As to quaternary structure, interacts with FtsZ.

Its subcellular location is the cytoplasm. Its function is as follows. Cell division factor that enhances FtsZ-ring assembly. Directly interacts with FtsZ and promotes bundling of FtsZ protofilaments, with a reduction in FtsZ GTPase activity. This is Cell division protein ZapD from Shewanella oneidensis (strain ATCC 700550 / JCM 31522 / CIP 106686 / LMG 19005 / NCIMB 14063 / MR-1).